Consider the following 282-residue polypeptide: Bifunctional protein FolD (282 aa).

Residues 164–166 and Ser-189 contribute to the NADP(+) site; that span reads GRS.

The protein belongs to the tetrahydrofolate dehydrogenase/cyclohydrolase family. In terms of assembly, homodimer.

The catalysed reaction is (6R)-5,10-methylene-5,6,7,8-tetrahydrofolate + NADP(+) = (6R)-5,10-methenyltetrahydrofolate + NADPH. The enzyme catalyses (6R)-5,10-methenyltetrahydrofolate + H2O = (6R)-10-formyltetrahydrofolate + H(+). The protein operates within one-carbon metabolism; tetrahydrofolate interconversion. Its function is as follows. Catalyzes the oxidation of 5,10-methylenetetrahydrofolate to 5,10-methenyltetrahydrofolate and then the hydrolysis of 5,10-methenyltetrahydrofolate to 10-formyltetrahydrofolate. The chain is Bifunctional protein FolD from Anaeromyxobacter dehalogenans (strain 2CP-C).